The primary structure comprises 1726 residues: Gag-Pro-Pol polyprotein (1726 aa).

Residue Gly2 is the site of N-myristoyl glycine; by host attachment. The segment at 103–148 is disordered; it reads LKQEEDPLHTPDSVPSYDPPPPPPPSLKMHPSDNDDSLSSTDEAEL. Pro residues predominate over residues 119 to 128; sequence YDPPPPPPPS. The short motif at 202 to 205 is the PTAP/PSAP motif element; the sequence is PSAP. The PPXY motif signature appears at 208–211; sequence PPAY. Residues 287 to 290 carry the PTAP/PSAP motif motif; sequence PTAP. Residues 507–524 form a CCHC-type zinc finger; it reads SGCFVCGQPGHRAAVCPQ. The tract at residues 550–570 is disordered; that stretch reads RSKTDVQGNPLPPVSGNLGEG. Positions 734 to 810 constitute a Peptidase A2 domain; sequence FRGVLDTGAD…LPVNLWGRDI (77 aa). Catalysis depends on Asp739, which acts as the Protease; shared with dimeric partner. Residues 821 to 866 form the G-patch domain; that stretch reads PSPTVTDLMLDQGLLPNQGLGKQHQGIILPLDLKPNQDRKGLGCFP. The Reverse transcriptase domain maps to 911 to 1099; sequence LRLGHIEPST…FPYNYLGFSL (189 aa). Mg(2+)-binding residues include Asp976, Asp1051, Asp1052, Asp1322, Glu1351, Asp1371, and Asp1436. One can recognise an RNase H type-1 domain in the interval 1313–1444; it reads IPEATLIFTD…ADVLTKQVFF (132 aa). An Integrase-type zinc finger spans residues 1446–1487; that stretch reads SAIDAARKSHDLHHQNSHSLRLQFKISREAARQIVKSCSTCP. Residues His1455, His1459, Cys1483, and Cys1486 each contribute to the Zn(2+) site. The Integrase catalytic domain occupies 1500 to 1659; the sequence is RGLRPNHLWQ…SAAQRFWGER (160 aa). Residues Asp1511, Asp1568, and Glu1604 each coordinate Mg(2+). Positions 1665–1714 form a DNA-binding region, integrase-type; sequence PLVRWKDPLTNLWYGPDPVLIWGRGHVCVFPQDAEAPRWIPERLVRAAEE.

It belongs to the retroviral Pol polyprotein family. Homodimer. In terms of assembly, interacts with the G-patch peptide. As to quaternary structure, interacts with the reverse transcriptase/ribonuclease H. Homotrimer. The cofactor is Mg(2+). Released by autocatalytic processing. The protease can undergo further autoprocessing to yield 2 shorter but enzymatically active forms of 12 kDa and 13 kDa. In terms of processing, myristoylated. Myristoylation of the matrix (MA) domain mediates the transport and binding of Gag polyproteins to the host plasma membrane and is required for the assembly of viral particles. Post-translationally, specific enzymatic cleavages in vivo yield mature proteins.

It is found in the virion. The enzyme catalyses DNA(n) + a 2'-deoxyribonucleoside 5'-triphosphate = DNA(n+1) + diphosphate. It carries out the reaction Endonucleolytic cleavage to 5'-phosphomonoester.. It catalyses the reaction dUTP + H2O = dUMP + diphosphate + H(+). Matrix protein. Its function is as follows. Nucleocapsid protein p14: Nucleocapsid protein. Functionally, capsid protein. In terms of biological role, the aspartyl protease mediates proteolytic cleavages of Gag and Gag-Pol polyproteins during or shortly after the release of the virion from the plasma membrane. Cleavages take place as an ordered, step-wise cascade to yield mature proteins. This process is called maturation. Displays maximal activity during the budding process just prior to particle release from the cell. Enhances the activity of the reverse transcriptase. May be part of the mature RT. Its function is as follows. RT is a multifunctional enzyme that converts the viral dimeric RNA genome into dsDNA in the cytoplasm, shortly after virus entry into the cell. This enzyme displays a DNA polymerase activity that can copy either DNA or RNA templates, and a ribonuclease H (RNase H) activity that cleaves the RNA strand of RNA-DNA heteroduplexes in a partially processive 3' to 5' endonucleasic mode. Conversion of viral genomic RNA into dsDNA requires many steps. A tRNA binds to the primer-binding site (PBS) situated at the 5' end of the viral RNA. RT uses the 3' end of the tRNA primer to perfom a short round of RNA-dependent minus-strand DNA synthesis. The reading proceeds through the U5 region and ends after the repeated (R) region which is present at both ends of viral RNA. The portion of the RNA-DNA heteroduplex is digested by the RNase H, resulting in a ssDNA product attached to the tRNA primer. This ssDNA/tRNA hybridizes with the identical R region situated at the 3' end of viral RNA. This template exchange, known as minus-strand DNA strong stop transfer, can be either intra- or intermolecular. RT uses the 3' end of this newly synthesized short ssDNA to perfom the RNA-dependent minus-strand DNA synthesis of the whole template. RNase H digests the RNA template except for a polypurine tract (PPT) situated at the 5' end of the genome. It is not clear if both polymerase and RNase H activities are simultaneous. RNase H probably can proceed both in a polymerase-dependent (RNA cut into small fragments by the same RT performing DNA synthesis) and a polymerase-independent mode (cleavage of remaining RNA fragments by free RTs). Secondly, RT performs DNA-directed plus-strand DNA synthesis using the PPT that has not been removed by RNase H as primers. PPT and tRNA primers are then removed by RNase H. The 3' and 5' ssDNA PBS regions hybridize to form a circular dsDNA intermediate. Strand displacement synthesis by RT to the PBS and PPT ends produces a blunt ended, linear dsDNA copy of the viral genome that includes long terminal repeats (LTRs) at both ends. Functionally, catalyzes viral DNA integration into the host chromosome, by performing a series of DNA cutting and joining reactions. This is Gag-Pro-Pol polyprotein (pol) from Ovis aries (Sheep).